The sequence spans 123 residues: Small ribosomal subunit protein uS13 (123 aa).

The interval 95 to 123 is disordered; that stretch reads GLPVRGQRTKTNARTRKGPARTVAGKKKK.

The protein belongs to the universal ribosomal protein uS13 family. As to quaternary structure, part of the 30S ribosomal subunit. Forms a loose heterodimer with protein S19. Forms two bridges to the 50S subunit in the 70S ribosome.

In terms of biological role, located at the top of the head of the 30S subunit, it contacts several helices of the 16S rRNA. In the 70S ribosome it contacts the 23S rRNA (bridge B1a) and protein L5 of the 50S subunit (bridge B1b), connecting the 2 subunits; these bridges are implicated in subunit movement. Contacts the tRNAs in the A and P-sites. In Heliobacterium modesticaldum (strain ATCC 51547 / Ice1), this protein is Small ribosomal subunit protein uS13.